Consider the following 75-residue polypeptide: Large ribosomal subunit protein uL29 (75 aa).

Belongs to the universal ribosomal protein uL29 family.

This chain is Large ribosomal subunit protein uL29, found in Nostoc punctiforme (strain ATCC 29133 / PCC 73102).